A 23-amino-acid polypeptide reads, in one-letter code: Septenin 2d (23 aa).

As to expression, expressed in skin glands.

It localises to the secreted. Its function is as follows. May act as an antimicrobial peptide. This is Septenin 2d from Osteopilus septentrionalis (Cuban treefrog).